Reading from the N-terminus, the 93-residue chain is Small ribosomal subunit protein uS19c (93 aa).

The protein belongs to the universal ribosomal protein uS19 family.

It localises to the plastid. Its subcellular location is the chloroplast. Functionally, protein S19 forms a complex with S13 that binds strongly to the 16S ribosomal RNA. This Stigeoclonium helveticum (Green alga) protein is Small ribosomal subunit protein uS19c.